A 380-amino-acid polypeptide reads, in one-letter code: Epoxyqueuosine reductase (380 aa).

Catalysis depends on Asp-134, which acts as the Proton donor. Positions 178–208 (FPPDKPIEDQCGGCTKCIDICPTGALIQGGQ) constitute a 4Fe-4S ferredoxin-type 1 domain. [4Fe-4S] cluster contacts are provided by Cys-188, Cys-191, Cys-194, Cys-198, Cys-214, Cys-240, Cys-243, and Cys-247. Residues 226-258 (PEEYRDKIGNRIYGCDTCQTVCPKNKGMDFHNH) enclose the 4Fe-4S ferredoxin-type 2 domain.

Belongs to the QueG family. As to quaternary structure, monomer. It depends on cob(II)alamin as a cofactor. Requires [4Fe-4S] cluster as cofactor.

Its subcellular location is the cytoplasm. The catalysed reaction is epoxyqueuosine(34) in tRNA + AH2 = queuosine(34) in tRNA + A + H2O. It participates in tRNA modification; tRNA-queuosine biosynthesis. Its function is as follows. Catalyzes the conversion of epoxyqueuosine (oQ) to queuosine (Q), which is a hypermodified base found in the wobble positions of tRNA(Asp), tRNA(Asn), tRNA(His) and tRNA(Tyr). The sequence is that of Epoxyqueuosine reductase from Bacillus cereus (strain ATCC 14579 / DSM 31 / CCUG 7414 / JCM 2152 / NBRC 15305 / NCIMB 9373 / NCTC 2599 / NRRL B-3711).